We begin with the raw amino-acid sequence, 406 residues long: Olfactomedin-like protein 3 (406 aa).

The signal sequence occupies residues 1–21; the sequence is MGPSAPLLLLFFLSWTGPLQG. Residues 25–101 adopt a coiled-coil conformation; the sequence is HLVEYMERRL…REVDYLETQN (77 aa). Positions 134 to 401 constitute an Olfactomedin-like domain; that stretch reads DCSYTVAQVR…QIVYKLEMKK (268 aa). A disulfide bridge connects residues Cys-135 and Cys-328. 2 N-linked (GlcNAc...) asparagine glycosylation sites follow: Asn-177 and Asn-248.

This sequence belongs to the OLFML3 family.

Its subcellular location is the secreted. Its function is as follows. Secreted scaffold protein that plays an essential role in dorsoventral patterning during early development. Stabilizes axial formation by restricting chordin (CHRD) activity on the dorsal side. Acts by facilitating the association between the tolloid proteases and their substrate chordin (CHRD), leading to enhance chordin (CHRD) degradation. May have matrix-related function involved in placental and embryonic development, or play a similar role in other physiological processes. In Mus musculus (Mouse), this protein is Olfactomedin-like protein 3 (Olfml3).